The following is a 1003-amino-acid chain: cGMP-dependent protein kinase (1003 aa).

Residues 1–141 (MGACSSKAQH…KAIKQQEDTQ (141 aa)) form a disordered region. A lipid anchor (N-myristoyl glycine) is attached at glycine 2. Residue cysteine 4 is the site of S-palmitoyl cysteine attachment. Residues 69–85 (EQQQQQQQQQQQQQEQQ) show a composition bias toward low complexity. Basic and acidic residues-rich tracts occupy residues 86-109 (QHPE…ERKP) and 127-141 (ERKV…EDTQ). CNMP-binding domain stretches follow at residues 173–289 (VCSS…FLAS), 292–391 (FFEM…RVLG), 411–548 (VFAS…ATLG), and 570–669 (IFRY…LQIV). Positions 237, 238, 247, and 248 each coordinate 3',5'-cyclic GMP. Residues arginine 625, glycine 634, glutamate 635, alanine 637, arginine 644, and serine 645 each coordinate 3',5'-cyclic GMP. The Protein kinase domain occupies 693–950 (LNVVRVVGRG…YKDIKEHAFF (258 aa)). Residues 699–707 (VGRGTFGTV) and lysine 722 contribute to the ATP site. Residue aspartate 816 is the Proton acceptor of the active site. Residues 951-1003 (SDFDWDRLAGRDLSPPLLPKGEIYAEDAEEGGLDIEEDEGIELEDEYEWDKDF) enclose the AGC-kinase C-terminal domain.

This sequence belongs to the protein kinase superfamily. AGC Ser/Thr protein kinase family. cGMP subfamily. Monomer. Mg(2+) serves as cofactor.

It is found in the cell membrane. It localises to the cytoplasm. The enzyme catalyses L-seryl-[protein] + ATP = O-phospho-L-seryl-[protein] + ADP + H(+). It carries out the reaction L-threonyl-[protein] + ATP = O-phospho-L-threonyl-[protein] + ADP + H(+). Activated by cGMP. The cGMP-binding domains acts cooperatively to activate PKG. Inhibited by the antiparasitic small molecule 4-[2-(4-fluorophenyl)-5-(1-methylpiperidine-4-yl)-1Hpyrrol- 3-yl]pyridine (compound 1). Functionally, serine/threonine protein kinase which acts as a downstream effector of the second messenger cGMP. This chain is cGMP-dependent protein kinase, found in Eimeria tenella (Coccidian parasite).